Consider the following 145-residue polypeptide: Ventricular natriuretic peptide (145 aa).

Positions 1 to 24 (MRMGKIAVGYGFLLLLVFQLGVRA) are cleaved as a signal peptide. A disulfide bridge connects residues C117 and C133.

Belongs to the natriuretic peptide family. In terms of tissue distribution, heart atrium and ventricle, and to a very low extent in brain.

It is found in the secreted. Its function is as follows. Exhibits natriuretic and vasodepressor activity. The protein is Ventricular natriuretic peptide (vnp) of Acipenser transmontanus (White sturgeon).